The primary structure comprises 122 residues: Acyl carrier protein 1, mitochondrial (122 aa).

Residues M1–F34 constitute a mitochondrion transit peptide. The region spanning E44 to P119 is the Carrier domain. The residue at position 79 (S79) is an O-(pantetheine 4'-phosphoryl)serine.

The protein belongs to the acyl carrier protein (ACP) family. Complex I is composed of at least 49 different subunits. In terms of processing, 4'-phosphopantetheine is transferred from CoA to a specific serine of the apo-ACP-like protein.

It is found in the mitochondrion. It participates in lipid metabolism; fatty acid biosynthesis. Its function is as follows. Carrier of the growing fatty acid chain in fatty acid biosynthesis. May be involved in the synthesis of short and medium chain fatty acids. Accessory and non-catalytic subunit of the mitochondrial membrane respiratory chain NADH dehydrogenase (Complex I), which functions in the transfer of electrons from NADH to the respiratory chain. This Arabidopsis thaliana (Mouse-ear cress) protein is Acyl carrier protein 1, mitochondrial (MTACP1).